Consider the following 210-residue polypeptide: Hypoxanthine-guanine phosphoribosyltransferase (210 aa).

Residues K54, 113 to 121 (EDILDTALT), K145, and D173 each bind GMP. Catalysis depends on D117, which acts as the Proton acceptor. D173 is a binding site for Mg(2+).

Belongs to the purine/pyrimidine phosphoribosyltransferase family. It depends on Mg(2+) as a cofactor.

The protein resides in the cytoplasm. It carries out the reaction IMP + diphosphate = hypoxanthine + 5-phospho-alpha-D-ribose 1-diphosphate. The catalysed reaction is GMP + diphosphate = guanine + 5-phospho-alpha-D-ribose 1-diphosphate. Its pathway is purine metabolism; IMP biosynthesis via salvage pathway; IMP from hypoxanthine: step 1/1. Its function is as follows. Converts guanine to guanosine monophosphate, and hypoxanthine to inosine monophosphate. Transfers the 5-phosphoribosyl group from 5-phosphoribosylpyrophosphate onto the purine. Plays a central role in the generation of purine nucleotides through the purine salvage pathway. The protein is Hypoxanthine-guanine phosphoribosyltransferase (HGPRT) of Trypanosoma brucei brucei.